A 73-amino-acid chain; its full sequence is Conotoxin Asp7/Gla(3)-TxVI (73 aa).

The N-terminal stretch at 1–19 (MQKLIILLLVAAVLMSTQA) is a signal peptide. Residues 20-44 (VLQEKRPKEKIKFLSKRKTDAEKQQ) constitute a propeptide that is removed on maturation. Intrachain disulfides connect cysteine 48–cysteine 62, cysteine 55–cysteine 66, and cysteine 61–cysteine 71. 4-hydroxyproline occurs at positions 49 and 54. Position 60 is a 4-carboxyglutamate (glutamate 60). Tryptophan 64 is subject to 6'-bromotryptophan.

Expressed by the venom duct.

The protein localises to the secreted. This Conus textile (Cloth-of-gold cone) protein is Conotoxin Asp7/Gla(3)-TxVI.